Here is a 105-residue protein sequence, read N- to C-terminus: UPF0235 protein RrIowa_1526 (105 aa).

This sequence belongs to the UPF0235 family.

This chain is UPF0235 protein RrIowa_1526, found in Rickettsia rickettsii (strain Iowa).